A 299-amino-acid chain; its full sequence is Protoheme IX farnesyltransferase (299 aa).

9 helical membrane-spanning segments follow: residues 27-47, 53-73, 97-117, 121-141, 149-169, 175-195, 222-242, 244-264, and 273-293; these read VVALMLLTSVVGMSLAPHEHF, LIALVGIALMAGSAAAFNHLI, FNVLLFALLIGSLGFLSLMLW, LTAYLTFASLLGYAVVYTLYL, IVIAGIAGAMPPLLGWTSITG, AWLLVMIIFIWTPPHFWALAI, ILLYAILLALVCMLPVLVGMA, YLYLFSALVLNVCFVRYAIKL, and AIEMFRFSIYFLLLLFCALLL.

The protein belongs to the UbiA prenyltransferase family. Protoheme IX farnesyltransferase subfamily.

It localises to the cell inner membrane. It catalyses the reaction heme b + (2E,6E)-farnesyl diphosphate + H2O = Fe(II)-heme o + diphosphate. Its pathway is porphyrin-containing compound metabolism; heme O biosynthesis; heme O from protoheme: step 1/1. Converts heme B (protoheme IX) to heme O by substitution of the vinyl group on carbon 2 of heme B porphyrin ring with a hydroxyethyl farnesyl side group. The sequence is that of Protoheme IX farnesyltransferase from Vibrio vulnificus (strain YJ016).